Here is a 244-residue protein sequence, read N- to C-terminus: Protein crossbronx (244 aa).

The UBC core domain maps to 20-176 (QQEYKILAEY…VQENIKESKE (157 aa)). A disordered region spans residues 209–244 (AGRSKQTEPSAQQGNGGHATGLSWVKEGEFKPLSIE).

The protein belongs to the ubiquitin-conjugating enzyme family. FTS subfamily.

In Drosophila simulans (Fruit fly), this protein is Protein crossbronx (cbx).